The sequence spans 298 residues: Calcium-binding protein 1 (298 aa).

Over residues 1 to 10 (MSSHIAKSES) the composition is skewed to basic and acidic residues. The segment at 1–131 (MSSHIAKSES…APAGTPEADP (131 aa)) is disordered. A lipid anchor (N-myristoyl glycine) is attached at Ser-2. His-4 is lipidated: S-palmitoyl cysteine. The span at 11–25 (KTSLLKAAAASGGSR) shows a compositional bias: low complexity. EF-hand domains lie at 153 to 188 (EEIE…MGYM), 207 to 224 (GHVD…KLLA), 230 to 265 (IGVK…LLGH), and 267 to 298 (VGHR…MMSR). Asp-166, Asp-168, Asp-170, Tyr-172, and Asp-177 together coordinate Ca(2+). 4 residues coordinate Ca(2+): Asp-243, Asn-245, Asp-247, and Glu-249. Position 251 is a phosphoserine (Ser-251). Residues Glu-254, Asp-280, Asn-282, Asp-284, Arg-286, and Glu-291 each coordinate Ca(2+).

As to quaternary structure, interacts with ITPR1, ITPR2 and ITPR3. The strength of this interaction inversely correlates with calcium concentration. Interacts with CACNA1A (via C-terminal CDB motif) in the pre- and postsynaptic membranes. Interacts with CACNA1C. Interacts with CACNA1D. Interacts (via EF-hands 1 and 2) at microtubules with MAP1LC3B. Interacts (via EF-hands 1 and 2) with NSMF (via the central NLS-containing motif region), the interaction occurs in a calcium dependent manner after synaptic NMDA receptor stimulation and prevents nuclear import of NSMF. Interacts with MYO1C and TRPC5. Interacts with SPACA9. In terms of processing, phosphorylated. The phosphorylation regulates the activity. As to expression, somatodendritic compartment of neurons. Restricted expression in retina to a subpopulation of amacrine, bipolar, and ganglion cells. According to PubMed:11906216, expression is heterogeneous within brain regions and their major cell types and does not match with those of marker proteins for characterized neuronal subpopulations. Isoform 2: Minor isoform expressed in the brain, in the granule cell layer of the cerebellum, at low level. Not developmentally regulated. Isoform 3: Minor isoform expressed in the brain, in the granule cell layer. of the cerebellum, at low level. Not developmentally regulated.

The protein localises to the cytoplasm. It is found in the cytoskeleton. Modulates calcium-dependent activity of inositol 1,4,5-triphosphate receptors (ITPRs). Inhibits agonist-induced intracellular calcium signaling. Enhances inactivation and does not support calcium-dependent facilitation of voltage-dependent P/Q-type calcium channels. Causes calcium-dependent facilitation and inhibits inactivation of L-type calcium channels by binding to the same sites as calmodulin in the C-terminal domain of CACNA1C, but has an opposite effect on channel function. Suppresses the calcium-dependent inactivation of CACNA1D. Inhibits TRPC5 channels. Prevents NMDA receptor-induced cellular degeneration. Required for the normal transfer of light signals through the retina. In Rattus norvegicus (Rat), this protein is Calcium-binding protein 1 (Cabp1).